A 160-amino-acid polypeptide reads, in one-letter code: Putative UPF0479 protein YNL339W-B (160 aa).

2 consecutive transmembrane segments (helical) span residues 39–59 (IVFC…KVLQ) and 136–156 (VPMI…ISQH).

This sequence belongs to the UPF0479 family.

It is found in the membrane. The chain is Putative UPF0479 protein YNL339W-B from Saccharomyces cerevisiae (strain ATCC 204508 / S288c) (Baker's yeast).